The chain runs to 304 residues: Murein tetrapeptide carboxypeptidase (304 aa).

Catalysis depends on Ser106, which acts as the Nucleophile. Catalysis depends on charge relay system residues Glu200 and His270.

Belongs to the peptidase S66 family.

Its subcellular location is the cytoplasm. The catalysed reaction is N-acetyl-D-glucosaminyl-N-acetylmuramoyl-L-alanyl-meso-2,6-diaminoheptanedioyl-D-alanine + H2O = N-acetyl-D-glucosaminyl-N-acetylmuramoyl-L-alanyl-meso-2,6-diaminoheptanedioate + D-alanine. The protein operates within cell wall biogenesis; peptidoglycan recycling. Inhibited by beta-lactams containing a D-amino acid side chain. Its function is as follows. Releases the terminal D-alanine residue from the cytoplasmic tetrapeptide recycling product L-Ala-gamma-D-Glu-meso-Dap-D-Ala. To a lesser extent, can also cleave D-Ala from murein derivatives containing the tetrapeptide, i.e. MurNAc-tetrapeptide, UDP-MurNAc-tetrapeptide, GlcNAc-MurNAc-tetrapeptide, and GlcNAc-anhMurNAc-tetrapeptide. Does not act on murein sacculi or cross-linked muropeptides. The tripeptides produced by the LcdA reaction can then be reused as peptidoglycan building blocks; LcdA is thereby involved in murein recycling. Is also essential for viability during stationary phase. The chain is Murein tetrapeptide carboxypeptidase (ldcA) from Escherichia coli (strain K12).